The primary structure comprises 185 residues: Superoxide dismutase [Cu-Zn] (185 aa).

A signal peptide spans 1 to 18 (MTAFYKLCGMSMLSLVLA). Cu cation contacts are provided by histidine 85, histidine 87, and histidine 102. Cysteines 92 and 180 form a disulfide. Residues histidine 102, histidine 111, histidine 120, and aspartate 123 each contribute to the Zn(2+) site. Cu cation is bound at residue histidine 158.

The protein belongs to the Cu-Zn superoxide dismutase family. As to quaternary structure, homodimer. Cu cation serves as cofactor. It depends on Zn(2+) as a cofactor.

The protein localises to the periplasm. It catalyses the reaction 2 superoxide + 2 H(+) = H2O2 + O2. In terms of biological role, destroys radicals which are normally produced within the cells and which are toxic to biological systems. The sequence is that of Superoxide dismutase [Cu-Zn] (sodC) from Francisella tularensis subsp. holarctica (strain LVS).